The chain runs to 110 residues: Large ribosomal subunit protein uL22 (110 aa).

The protein belongs to the universal ribosomal protein uL22 family. Part of the 50S ribosomal subunit.

Functionally, this protein binds specifically to 23S rRNA; its binding is stimulated by other ribosomal proteins, e.g. L4, L17, and L20. It is important during the early stages of 50S assembly. It makes multiple contacts with different domains of the 23S rRNA in the assembled 50S subunit and ribosome. Its function is as follows. The globular domain of the protein is located near the polypeptide exit tunnel on the outside of the subunit, while an extended beta-hairpin is found that lines the wall of the exit tunnel in the center of the 70S ribosome. The chain is Large ribosomal subunit protein uL22 from Chromohalobacter salexigens (strain ATCC BAA-138 / DSM 3043 / CIP 106854 / NCIMB 13768 / 1H11).